The following is a 303-amino-acid chain: UDP-3-O-acyl-N-acetylglucosamine deacetylase (303 aa).

The Zn(2+) site is built by H78, H237, and D241. H264 functions as the Proton donor in the catalytic mechanism.

It belongs to the LpxC family. Requires Zn(2+) as cofactor.

The enzyme catalyses a UDP-3-O-[(3R)-3-hydroxyacyl]-N-acetyl-alpha-D-glucosamine + H2O = a UDP-3-O-[(3R)-3-hydroxyacyl]-alpha-D-glucosamine + acetate. It functions in the pathway glycolipid biosynthesis; lipid IV(A) biosynthesis; lipid IV(A) from (3R)-3-hydroxytetradecanoyl-[acyl-carrier-protein] and UDP-N-acetyl-alpha-D-glucosamine: step 2/6. Its function is as follows. Catalyzes the hydrolysis of UDP-3-O-myristoyl-N-acetylglucosamine to form UDP-3-O-myristoylglucosamine and acetate, the committed step in lipid A biosynthesis. This chain is UDP-3-O-acyl-N-acetylglucosamine deacetylase, found in Pseudomonas fluorescens (strain ATCC BAA-477 / NRRL B-23932 / Pf-5).